The primary structure comprises 537 residues: CTP synthase (537 aa).

Residues 1 to 265 are amidoligase domain; sequence MTKYIFVTGG…GKYLTKRLKL (265 aa). Residue Ser13 coordinates CTP. Ser13 lines the UTP pocket. 14–19 contacts ATP; it reads GLGKGI. Tyr54 contacts L-glutamine. Asp71 lines the ATP pocket. Mg(2+)-binding residues include Asp71 and Glu139. CTP contacts are provided by residues 146-148, 186-191, and Lys222; these read DIE and KTKPTQ. UTP-binding positions include 186-191 and Lys222; that span reads KTKPTQ. Residues 290–532 form the Glutamine amidotransferase type-1 domain; that stretch reads EIAIVGKYVK…VRAAKEYKQE (243 aa). Gly351 contributes to the L-glutamine binding site. Cys378 acts as the Nucleophile; for glutamine hydrolysis in catalysis. Residues 379–382, Glu402, and Arg459 each bind L-glutamine; that span reads FGFQ. Catalysis depends on residues His505 and Glu507.

Belongs to the CTP synthase family. Homotetramer.

It carries out the reaction UTP + L-glutamine + ATP + H2O = CTP + L-glutamate + ADP + phosphate + 2 H(+). The catalysed reaction is L-glutamine + H2O = L-glutamate + NH4(+). It catalyses the reaction UTP + NH4(+) + ATP = CTP + ADP + phosphate + 2 H(+). It participates in pyrimidine metabolism; CTP biosynthesis via de novo pathway; CTP from UDP: step 2/2. Its activity is regulated as follows. Allosterically activated by GTP, when glutamine is the substrate; GTP has no effect on the reaction when ammonia is the substrate. The allosteric effector GTP functions by stabilizing the protein conformation that binds the tetrahedral intermediate(s) formed during glutamine hydrolysis. Inhibited by the product CTP, via allosteric rather than competitive inhibition. Functionally, catalyzes the ATP-dependent amination of UTP to CTP with either L-glutamine or ammonia as the source of nitrogen. Regulates intracellular CTP levels through interactions with the four ribonucleotide triphosphates. This is CTP synthase from Pyrococcus furiosus (strain ATCC 43587 / DSM 3638 / JCM 8422 / Vc1).